The following is a 528-amino-acid chain: GMP synthase [glutamine-hydrolyzing] (528 aa).

The 192-residue stretch at 13–204 (AIVILDFGSQ…VYDICSCEPD (192 aa)) folds into the Glutamine amidotransferase type-1 domain. Catalysis depends on Cys-90, which acts as the Nucleophile. Residues His-178 and Glu-180 contribute to the active site. Residues 205 to 403 (WTTNLFIDEA…LGLPDEIVRR (199 aa)) form the GMPS ATP-PPase domain. 232 to 238 (SGGVDSS) lines the ATP pocket.

As to quaternary structure, homodimer.

It catalyses the reaction XMP + L-glutamine + ATP + H2O = GMP + L-glutamate + AMP + diphosphate + 2 H(+). The protein operates within purine metabolism; GMP biosynthesis; GMP from XMP (L-Gln route): step 1/1. Functionally, catalyzes the synthesis of GMP from XMP. This chain is GMP synthase [glutamine-hydrolyzing], found in Prochlorococcus marinus (strain NATL2A).